We begin with the raw amino-acid sequence, 124 residues long: Small ribosomal subunit protein uS13 (124 aa).

The interval 87 to 124 (GSYRGNRHRKRLPVRGQRTKTNSRTRKGKRRTVGSKTK) is disordered. The span at 91–124 (GNRHRKRLPVRGQRTKTNSRTRKGKRRTVGSKTK) shows a compositional bias: basic residues.

The protein belongs to the universal ribosomal protein uS13 family. In terms of assembly, part of the 30S ribosomal subunit. Forms a loose heterodimer with protein S19. Forms two bridges to the 50S subunit in the 70S ribosome.

Its function is as follows. Located at the top of the head of the 30S subunit, it contacts several helices of the 16S rRNA. In the 70S ribosome it contacts the 23S rRNA (bridge B1a) and protein L5 of the 50S subunit (bridge B1b), connecting the 2 subunits; these bridges are implicated in subunit movement. Contacts the tRNAs in the A and P-sites. In Elusimicrobium minutum (strain Pei191), this protein is Small ribosomal subunit protein uS13.